The chain runs to 314 residues: Olfactory receptor 5P81 (314 aa).

Over 1-28 (MAFLEDGNHTVVTEFILLGLTDDPVLRV) the chain is Extracellular. Asn8 carries N-linked (GlcNAc...) asparagine glycosylation. Residues 29-49 (ILFIIILCIYLVTVSGNLSTI) traverse the membrane as a helical segment. Over 50–57 (LLIRVSSQ) the chain is Cytoplasmic. The chain crosses the membrane as a helical span at residues 58–78 (LHHPMYFFLSHLASIDIAISS). Topologically, residues 79 to 102 (SVTPNMVVNFLVERSSISYIGCGI) are extracellular. An intrachain disulfide couples Cys100 to Cys192. The helical transmembrane segment at 103–123 (QLGSAVFFGAIECFLLAVMAY) threads the bilayer. Over 124-136 (DRFVAICNPLLYS) the chain is Cytoplasmic. Residues 137–157 (TKMSKQVCIQLLVGSYIGGFI) form a helical membrane-spanning segment. Residues 158 to 199 (HASFFTLSFVSFLFCGPNRINHFFCDFTPLVELSCSDNSVLI) are Extracellular-facing. Residues 200 to 220 (ILDSFSTGTIIVITVFVIAIS) traverse the membrane as a helical segment. Residues 221–240 (YTCILITILKMHSTEGRHKA) lie on the Cytoplasmic side of the membrane. The helical transmembrane segment at 241–261 (FSTCTSHLTVVTLLYGTVTFI) threads the bilayer. Residues 262–274 (YVMPKSSYSTDQN) lie on the Extracellular side of the membrane. Residues 275–295 (KVISVFYMVVIPMLNPIIYSL) form a helical membrane-spanning segment. Residues 296 to 314 (RNNEIKGALKKQLGEKNIF) lie on the Cytoplasmic side of the membrane.

This sequence belongs to the G-protein coupled receptor 1 family.

The protein localises to the cell membrane. In terms of biological role, potential odorant receptor. This Mus musculus (Mouse) protein is Olfactory receptor 5P81.